The following is a 356-amino-acid chain: Glutamine synthetase cytosolic isozyme 1-1 (356 aa).

Residue Ser2 is modified to N-acetylserine. 2 positions are modified to phosphoserine: Ser2 and Ser48. A GS beta-grasp domain is found at Ile19–Gly99. The segment at Lys36 to Gln62 is disordered. The 251-residue stretch at Lys106–Pro356 folds into the GS catalytic domain.

This sequence belongs to the glutamine synthetase family. In terms of assembly, homooctamer. Interacts with CRK3 and GRF3. In terms of processing, phosphorylated by CRK3. As to expression, expressed in root tips, root hairs and epidermis. Ubiquitously expressed with higher levels in siliques and roots.

The protein localises to the cytoplasm. It catalyses the reaction L-glutamate + NH4(+) + ATP = L-glutamine + ADP + phosphate + H(+). In terms of biological role, high-affinity glutamine synthetase which catalyzes the synthesis of glutamine from ammonium and glutamate. May contribute to the homeostatic control of glutamine synthesis in roots. The chain is Glutamine synthetase cytosolic isozyme 1-1 (GLN1-1) from Arabidopsis thaliana (Mouse-ear cress).